The primary structure comprises 430 residues: Asparagine--tRNA ligase (430 aa).

This sequence belongs to the class-II aminoacyl-tRNA synthetase family. In terms of assembly, homodimer.

It is found in the cytoplasm. The enzyme catalyses tRNA(Asn) + L-asparagine + ATP = L-asparaginyl-tRNA(Asn) + AMP + diphosphate + H(+). The chain is Asparagine--tRNA ligase from Geobacillus thermodenitrificans (strain NG80-2).